Here is a 105-residue protein sequence, read N- to C-terminus: Plastocyanin (105 aa).

The 105-residue stretch at 1–105 folds into the Plastocyanin-like domain; the sequence is ETYTVKLGSD…GMVGKITVAG (105 aa). The Cu(2+) site is built by H39, C89, H92, and M97.

The protein belongs to the plastocyanin family. Cu(2+) serves as cofactor.

Its subcellular location is the cellular thylakoid membrane. Participates in electron transfer between P700 and the cytochrome b6-f complex in photosystem I. The sequence is that of Plastocyanin (petE) from Anabaena variabilis.